Reading from the N-terminus, the 446-residue chain is 3-phosphoshikimate 1-carboxyvinyltransferase (446 aa).

Positions 21, 22, and 26 each coordinate 3-phosphoshikimate. Residue Lys21 coordinates phosphoenolpyruvate. Phosphoenolpyruvate is bound by residues Gly92 and Arg120. Positions 165, 166, 308, and 335 each coordinate 3-phosphoshikimate. Phosphoenolpyruvate is bound at residue Gln166. The Proton acceptor role is filled by Asp308. The phosphoenolpyruvate site is built by Arg339, Arg380, and Lys406.

The protein belongs to the EPSP synthase family. As to quaternary structure, monomer.

Its subcellular location is the cytoplasm. It carries out the reaction 3-phosphoshikimate + phosphoenolpyruvate = 5-O-(1-carboxyvinyl)-3-phosphoshikimate + phosphate. Its pathway is metabolic intermediate biosynthesis; chorismate biosynthesis; chorismate from D-erythrose 4-phosphate and phosphoenolpyruvate: step 6/7. Catalyzes the transfer of the enolpyruvyl moiety of phosphoenolpyruvate (PEP) to the 5-hydroxyl of shikimate-3-phosphate (S3P) to produce enolpyruvyl shikimate-3-phosphate and inorganic phosphate. This is 3-phosphoshikimate 1-carboxyvinyltransferase from Chlamydia caviae (strain ATCC VR-813 / DSM 19441 / 03DC25 / GPIC) (Chlamydophila caviae).